A 609-amino-acid chain; its full sequence is Large ribosomal subunit assembly factor BipA (609 aa).

In terms of domain architecture, tr-type G spans 3–198 (QNIRNIAIIA…AIIKYAPAPN (196 aa)). Residues 15 to 20 (DHGKTT) and 128 to 131 (NKID) contribute to the GTP site.

This sequence belongs to the TRAFAC class translation factor GTPase superfamily. Classic translation factor GTPase family. BipA subfamily. In terms of assembly, monomer.

It is found in the cytoplasm. The catalysed reaction is GTP + H2O = GDP + phosphate + H(+). Its function is as follows. A 50S ribosomal subunit assembly protein with GTPase activity, required for 50S subunit assembly at low temperatures, may also play a role in translation. Binds GTP and analogs. Binds the 70S ribosome between the 30S and 50S subunits, in a similar position as ribosome-bound EF-G; it contacts a number of ribosomal proteins, both rRNAs and the A-site tRNA. This chain is Large ribosomal subunit assembly factor BipA, found in Buchnera aphidicola subsp. Schizaphis graminum (strain Sg).